The sequence spans 127 residues: Fluoride-specific ion channel FluC (127 aa).

A run of 4 helical transmembrane segments spans residues 4-24 (LLLAVFIGGGTGSVARWMLSM), 35-55 (IGTLTANLLGAFIIGMGFAWF), 71-91 (TGFCGGLTTFSTFSAEVVFLL), and 103-123 (VLINLLGSFAMTALAFWLFSA). Glycine 75 and threonine 78 together coordinate Na(+).

The protein belongs to the fluoride channel Fluc/FEX (TC 1.A.43) family.

It localises to the cell inner membrane. The enzyme catalyses fluoride(in) = fluoride(out). Na(+) is not transported, but it plays an essential structural role and its presence is essential for fluoride channel function. Functionally, fluoride-specific ion channel. Important for reducing fluoride concentration in the cell, thus reducing its toxicity. The sequence is that of Fluoride-specific ion channel FluC from Salmonella agona (strain SL483).